A 377-amino-acid chain; its full sequence is tRNA(Met) cytidine acetate ligase (377 aa).

ATP-binding positions include 7 to 20 (ITEYNPFHNGHLFH), Gly-100, Asn-153, and Arg-178.

Belongs to the TmcAL family.

It is found in the cytoplasm. It carries out the reaction cytidine(34) in elongator tRNA(Met) + acetate + ATP = N(4)-acetylcytidine(34) in elongator tRNA(Met) + AMP + diphosphate. Its function is as follows. Catalyzes the formation of N(4)-acetylcytidine (ac(4)C) at the wobble position of elongator tRNA(Met), using acetate and ATP as substrates. First activates an acetate ion to form acetyladenylate (Ac-AMP) and then transfers the acetyl group to tRNA to form ac(4)C34. In Staphylococcus epidermidis (strain ATCC 12228 / FDA PCI 1200), this protein is tRNA(Met) cytidine acetate ligase.